Reading from the N-terminus, the 900-residue chain is MEFRFENLLGAPYRGGNAVITKNTQLISPVGNRVSVTDLSKNHSVTLPLETSTNICRLASSPDGTFLLAVDEQNRCLFINLPRRVVLHRITFKDKVGALKFSPNGKFIAVGIGKLVEIWRSPGFRRAVLPFERVRTFANSDDKVVSLEWSLDSDYLLVGSRDLAARLFCVRKLKGVLNKPFLFLGHRDSVVGCFFGVDKMTNKVNRAFTIARDGYIFSWGYTEKDVKMDESEDGHSEPPSPVTPDRADEVMVENGGGVGTELKKRKEYDGKGLESDEEGDDDDEEYMHRGKWVLLRKDGCNQASAKVTACDYHQGLDMVVVGFSNGVFGLYQMPDFICIHLLSISRQKLTTAVFNERGNWLTFGCAKLGQLLVWDWRTETYILKQQGHYFDVNCVTYSPDSQLLATGADDNKVKVWNVMSGTCFITFTEHTNAVTALHFMADNHSLLSASLDGTVRAWDFKRYKNYKTYTTPTPRQFVSLTADPSGDVVCAGTLDSFEIFVWSKKTGQIKDILSGHEAPVHGLMFSPLTQLLASSSWDYTVRLWDVFASKGTVETFRHNHDVLTVAFRPDGKQLASSTLDGQINFWDTIEGVLMYTIEGRRDIAGGRVMTDRRSAANSSSGKCFTTLCYSADGGYILAAGTSRYICMYDIADQVLLRRFQISHNLSLDGVLDFLHSKKMTEAGPIDLIDDDNSDEEGGIDKQSRGNLGYDLPGSRPNRGRPIIRTKSLSIAPTGRSFAAATTEGVLIFSIDDTFIFDPTDLDIDVTPEAVEAAIEEDEVSRALALSMRLNEDSLIKKCIFAVAPADIKAVAISVRQKYLERLMEALVDLLENCPHLEFILHWCQEICKAHGSSIQRNYRTLLPALRSLQKAITRAHQDLADMCSSNEYTLRYLCSVPNNH.

WD repeat units lie at residues 10 to 47, 50 to 89, 91 to 129, 139 to 178, and 185 to 229; these read GAPYRGGNAVITKNTQLISPVGNRVSVTDLSKNHSVTL, ETSTNICRLASSPDGTFLLAVDEQNRCLFINLPRRVVLHR, TFKDKVGALKFSPNGKFIAVGIGKLVEIWRSPGFRRAVL, NSDDKVVSLEWSLDSDYLLVGSRDLAARLFCVRKLKGVLN, and GHRD…VKMD. Residues 228-284 form a disordered region; that stretch reads MDESEDGHSEPPSPVTPDRADEVMVENGGGVGTELKKRKEYDGKGLESDEEGDDDDE. Over residues 261-274 the composition is skewed to basic and acidic residues; sequence ELKKRKEYDGKGLE. The residue at position 275 (Ser-275) is a Phosphoserine. Residues 275-284 show a composition bias toward acidic residues; sequence SDEEGDDDDE. 8 WD repeats span residues 302–341, 344–384, 387–426, 429–468, 472–512, 515–554, 557–596, and 619–658; these read QASAKVTACDYHQGLDMVVVGFSNGVFGLYQMPDFICIHL, ISRQ…YILK, GHYFDVNCVTYSPDSQLLATGADDNKVKVWNVMSGTCFIT, EHTNAVTALHFMADNHSLLSASLDGTVRAWDFKRYKNYKT, PTPR…IKDI, GHEAPVHGLMFSPLTQLLASSSWDYTVRLWDVFASKGTVE, RHNHDVLTVAFRPDGKQLASSTLDGQINFWDTIEGVLMYT, and SSGKCFTTLCYSADGGYILAAGTSRYICMYDIADQVLLRR. Positions 684–720 are disordered; it reads PIDLIDDDNSDEEGGIDKQSRGNLGYDLPGSRPNRGR. The segment covering 687–697 has biased composition (acidic residues); it reads LIDDDNSDEEG. A WD 14 repeat occupies 720 to 759; it reads RPIIRTKSLSIAPTGRSFAAATTEGVLIFSIDDTFIFDPT.

The protein belongs to the WD repeat PWP2 family. As to quaternary structure, component of the ribosomal small subunit (SSU) processome. Interacts with TBP1 in the nucleus. Expressed constitutively and ubiquitously; observed in seeds, seedlings, roots, leaves, stems, flowers and siliques.

The protein localises to the nucleus. The protein resides in the nucleolus. In terms of biological role, involved in nucleolar processing of pre-18S ribosomal RNA. Plays a role early in ribosome biogenesis, especially in the maturation of 5.8S rRNA. Required for guard cell functions. The chain is Periodic tryptophan protein 2 from Arabidopsis thaliana (Mouse-ear cress).